The sequence spans 126 residues: Ribosome-binding factor A (126 aa).

The protein belongs to the RbfA family. As to quaternary structure, monomer. Binds 30S ribosomal subunits, but not 50S ribosomal subunits or 70S ribosomes.

The protein localises to the cytoplasm. Its function is as follows. One of several proteins that assist in the late maturation steps of the functional core of the 30S ribosomal subunit. Associates with free 30S ribosomal subunits (but not with 30S subunits that are part of 70S ribosomes or polysomes). Required for efficient processing of 16S rRNA. May interact with the 5'-terminal helix region of 16S rRNA. This Azoarcus sp. (strain BH72) protein is Ribosome-binding factor A.